We begin with the raw amino-acid sequence, 716 residues long: Cytoplasmic polyadenylation element-binding protein 3 (716 aa).

The segment covering 1 to 11 has biased composition (basic and acidic residues); the sequence is MQDDLLMDKSK. Disordered stretches follow at residues 1–118 and 162–209; these read MQDD…WSTG and AQTQ…RSAA. Composition is skewed to low complexity over residues 13–31 and 54–63; these read QPQSQQQQRQQQQQQQQLQ and SSAVPALSPA. A compositionally biased stretch (pro residues) spans 91-100; sequence PQQPPPPQEP. Residues 107–118 show a composition bias toward polar residues; the sequence is LSPSFGSTWSTG. Pro residues predominate over residues 169–186; that stretch reads QPPPPAPQPPQPAQPPQA. Over residues 187–209 the composition is skewed to low complexity; sequence QPSQQRRSPASPSQAPYAQRSAA. Phosphoserine is present on residues Ser-194, Ser-197, and Ser-291. Position 309 is an asymmetric dimethylarginine (Arg-309). 2 positions are modified to phosphoserine: Ser-419 and Ser-420. RRM domains lie at 459–550 and 567–649; these read RKVF…PWNL and KTIF…PYVL.

This sequence belongs to the RRM CPEB family. As to quaternary structure, following synaptic activity, aggregates to form amyloid-like oligomers. Aggregation requires an intact actin cytoskeleton. Interacts with STAT5B; this inhibits STAT5B-mediated transcriptional activation. Interacts with E3 ubiquitin-protein ligase NEURL1; this leads to monoubiquitination and activation of CPEB3. Interacts with CAPN2; this leads to cleavage of CPEB3. Interacts (via C-terminal RNA-binding region) with TOB1; TOB1 also binds CNOT7/CAF1 and recruits it to CPEB3 to form a ternary complex. Interacts with SUMO-conjugating enzyme UBC9. Interacts with IPO5; the interaction is enhanced in a RAN-regulated manner following neuronal stimulation and mediates CPEB3 nuclear import. Interacts with exportin XPO1/CRM1. Post-translationally, activated by NEURL1-mediated monoubiquitination, resulting in the growth of new dendritic spines and increased levels of GRIA1 and GRIA2. NEURL1-mediated monoubiquitination facilitates synaptic plasticity and hippocampal-dependent memory storage. Under basal unstimulated conditions when CPEB3 is mainly unaggregated, sumoylated and acts as a translational repressor. Following neuronal stimulation, becomes desumoylated and aggregated which is required for the translation of mRNA targets and for dendritic filopodia formation. In terms of processing, following neuronal stimulation, cleaved by CAPN2 which abolishes its translational repressor activity, leading to translation of CPEB3 target mRNAs. Post-translationally, phosphorylation is enhanced by neuronal stimulation. Highly expressed in brain (at protein level). In brain, expressed in the hippocampus, granule cells and interneurons of the cerebellum, and mitral cells of the olfactory bulb (at protein level). Detected in the spinal cord and in peripheral dorsal root ganglia (at protein level). In the retina, strongly expressed in the retinal ganglion layer and, to a lesser extent, in the inner margin of the inner nuclear layer with expression also detected in the inner and outer plexiform layers (at protein level). Highly expressed in brain and heart, less in liver, kidney, embryo, skeletal muscle, lung and ovary. Weakly expressed in granular cells of dentate gyrus and the pyramidal cells of CA3 and CA1 of the hippocampus.

Its subcellular location is the cytoplasm. The protein localises to the nucleus. It localises to the synapse. The protein resides in the cell projection. It is found in the dendrite. Its subcellular location is the postsynaptic density. Its function is as follows. Sequence-specific RNA-binding protein which acts as a translational repressor in the basal unstimulated state but, following neuronal stimulation, acts as a translational activator. In contrast to CPEB1, does not bind to the cytoplasmic polyadenylation element (CPE), a uridine-rich sequence element within the mRNA 3'-UTR, but binds to a U-rich loop within a stem-loop structure. Required for the consolidation and maintenance of hippocampal-based long term memory. In the basal state, binds to the mRNA 3'-UTR of the glutamate receptors GRIA1 and GRIA2 and negatively regulates their translation. Also represses the translation of DLG4, GRIN1 GRIN2A and GRIN2B. When activated, acts as a translational activator of GRIA1 and GRIA2. In the basal state, suppresses SUMO2 translation but activates it following neuronal stimulation. Binds to the 3'-UTR of TRPV1 mRNA and represses TRPV1 translation which is required to maintain normal thermoception. Binds actin mRNA, leading to actin translational repression in the basal state and to translational activation following neuronal stimulation. Negatively regulates target mRNA levels by binding to TOB1 which recruits CNOT7/CAF1 to a ternary complex and this leads to target mRNA deadenylation and decay. In addition to its role in translation, binds to and inhibits the transcriptional activation activity of STAT5B without affecting its dimerization or DNA-binding activity. This, in turn, represses transcription of the STAT5B target gene EGFR which has been shown to play a role in enhancing learning and memory performance. In contrast to CPEB1, CPEB2 and CPEB4, not required for cell cycle progression. The chain is Cytoplasmic polyadenylation element-binding protein 3 (Cpeb3) from Mus musculus (Mouse).